A 336-amino-acid chain; its full sequence is MQKNLTRWLLTCCIMVVAMIIVGGITRLTDSGLSIVEWRPVTGILPPFSYDTWQAEFAKYKAFPEYNAVNYGMTLSEFKFIYLLEFVHRLLGRATGLIYILPLIYFYFKGIIKNRDILSYIIVLLLFCVQGFMGWYMVKSGLVNHPSVSHFRLAFHLIIAVIIYHLLFYKLVKNCCDILLIPSQINLKLPLIFSVAAIAMIYVQIFLGALVAGLDAGLIYNSFPLMGGNFIPIEIKDNFISFKNWYDPVFVQFMHRLGAYSLSIIVIALIISLLKVKNPKLNKVAFYLSIALLIQLSTGVITLLYHVPIIAASMHQFFAIVLLSVVIWCYSLIKNS.

A run of 5 helical transmembrane segments spans residues 5–25, 92–112, 117–137, 153–173, and 191–211; these read LTRW…VGGI, GRAT…KGII, ILSY…GWYM, LAFH…KLVK, and LIFS…GALV. His255 is a heme binding site. A run of 3 helical transmembrane segments spans residues 257–277, 284–304, and 307–327; these read LGAY…LKVK, VAFY…ITLL, and VPII…SVVI. His315 contacts heme.

The protein belongs to the COX15/CtaA family. Type 2 subfamily. Interacts with CtaB. Requires heme b as cofactor.

The protein resides in the cell membrane. The catalysed reaction is Fe(II)-heme o + 2 A + H2O = Fe(II)-heme a + 2 AH2. Its pathway is porphyrin-containing compound metabolism; heme A biosynthesis; heme A from heme O: step 1/1. In terms of biological role, catalyzes the conversion of heme O to heme A by two successive hydroxylations of the methyl group at C8. The first hydroxylation forms heme I, the second hydroxylation results in an unstable dihydroxymethyl group, which spontaneously dehydrates, resulting in the formyl group of heme A. This Rickettsia bellii (strain OSU 85-389) protein is Heme A synthase.